The primary structure comprises 278 residues: Undecaprenyl-diphosphatase 1 (278 aa).

Transmembrane regions (helical) follow at residues 45–65 (AVIG…LVYF), 95–115 (WWVI…KPLI), 119–139 (LASL…MWWA), 191–211 (VAAT…AGLY), 225–245 (PLAV…AWLL), and 256–276 (FVVY…TGVL).

Belongs to the UppP family.

The protein resides in the cell membrane. The catalysed reaction is di-trans,octa-cis-undecaprenyl diphosphate + H2O = di-trans,octa-cis-undecaprenyl phosphate + phosphate + H(+). Its function is as follows. Catalyzes the dephosphorylation of undecaprenyl diphosphate (UPP). Confers resistance to bacitracin. The polypeptide is Undecaprenyl-diphosphatase 1 (Streptomyces coelicolor (strain ATCC BAA-471 / A3(2) / M145)).